The primary structure comprises 1640 residues: Clathrin heavy chain 2 (1640 aa).

Residue alanine 2 is modified to N-acetylalanine. Residues 2 to 479 (AQILPVRFQE…TDPMLALSVY (478 aa)) are globular terminal domain. WD40-like repeat regions lie at residues 24–67 (NIGF…RPIS), 68–107 (AESAIMNPASKVIALKAGKTLQIFNIEMKSKMKAHTMAEE), 108–149 (VIFW…TSLV), 150–195 (GCQV…QPIE), 196–257 (GHAA…PEAQ), 258–301 (NDFP…ISAD), and 302–330 (TIFVTAPHKPTSGIIGVNKKGQVLSVCVE). Serine 67 carries the phosphoserine modification. Tyrosine 184 carries the phosphotyrosine modification. Threonine 394 is modified (phosphothreonine). The interval 449-465 (EKWLKEDKLECSEELGD) is binding site for the uncoating ATPase, involved in lattice disassembly. The interval 480-523 (LRANVPSKVIQCFAETGQFQKIVLYAKKVGYTPDWIFLLRGVMK) is flexible linker. The segment at 524-634 (ISPEQGLQFS…QALEHYTDLY (111 aa)) is distal segment. Positions 524 to 1640 (ISPEQGLQFS…PLVFDFDGHE (1117 aa)) are heavy chain arm. CHCR repeat units follow at residues 537–683 (VQDE…QLCV), 686–828 (ASKY…SEEV), 833–972 (IMAV…QLID), 979–1124 (LSET…VKEA), 1128–1269 (YIRG…FRFA), 1274–1420 (LHIV…LLIN), and 1423–1566 (LLVL…RECF). Tyrosine 634 is modified (phosphotyrosine). The tract at residues 639 to 1640 (AVVHTHLLNP…PLVFDFDGHE (1002 aa)) is proximal segment. At lysine 737 the chain carries N6-succinyllysine. Lysine 856 carries the post-translational modification N6-acetyllysine. At tyrosine 899 the chain carries Phosphotyrosine. Serine 1167 is subject to Phosphoserine. Tyrosine 1206 bears the Phosphotyrosine mark. The segment at 1213–1522 (AAKLLYSNVS…YLYKGNNWWA (310 aa)) is involved in binding clathrin light chain. Serine 1229 is modified (phosphoserine). Residue lysine 1441 is modified to N6-acetyllysine; alternate. Lysine 1441 is subject to N6-succinyllysine; alternate. Phosphotyrosine occurs at positions 1477 and 1487. Residue serine 1494 is modified to Phosphoserine. Lysine 1501 is subject to N6-acetyllysine. Residues 1551 to 1640 (QKLLQWFLEE…PLVFDFDGHE (90 aa)) are trimerization.

Belongs to the clathrin heavy chain family. In terms of assembly, clathrin triskelions, composed of 3 heavy chains and 3 light chains, are the basic subunits of the clathrin coat. In the presence of light chains, hub assembly is influenced by both the pH and the concentration of calcium. May interact with OCRL. Interacts with AFTPH/aftiphilin. Maximal levels in skeletal muscle. High levels in heart and testis. Low expression detected in all other tissues.

The protein localises to the cytoplasmic vesicle membrane. Its subcellular location is the membrane. It is found in the coated pit. Clathrin is the major protein of the polyhedral coat of coated pits and vesicles. Two different adapter protein complexes link the clathrin lattice either to the plasma membrane or to the trans-Golgi network. This chain is Clathrin heavy chain 2 (CLTCL1), found in Homo sapiens (Human).